The sequence spans 216 residues: Peroxiredoxin (216 aa).

The Thioredoxin domain occupies 2 to 158 (VVIGEKFPEV…ILRLVKALKV (157 aa)). Catalysis depends on Cys46, which acts as the Cysteine sulfenic acid (-SOH) intermediate. Arg121 lines the substrate pocket. A disulfide bridge links Cys205 with Cys211.

This sequence belongs to the peroxiredoxin family. Prx6 subfamily. In terms of assembly, homodecamer. Pentamer of dimers that assemble into a ring structure.

The protein resides in the cytoplasm. It carries out the reaction a hydroperoxide + [thioredoxin]-dithiol = an alcohol + [thioredoxin]-disulfide + H2O. Its function is as follows. Thiol-specific peroxidase that catalyzes the reduction of hydrogen peroxide and organic hydroperoxides to water and alcohols, respectively. Plays a role in cell protection against oxidative stress by detoxifying peroxides. In Thermococcus kodakarensis (strain ATCC BAA-918 / JCM 12380 / KOD1) (Pyrococcus kodakaraensis (strain KOD1)), this protein is Peroxiredoxin.